A 166-amino-acid chain; its full sequence is NADH-quinone oxidoreductase subunit E (166 aa).

The [2Fe-2S] cluster site is built by C92, C97, C133, and C137.

It belongs to the complex I 24 kDa subunit family. As to quaternary structure, composed of 13 different subunits. Subunits NuoCD, E, F, and G constitute the peripheral sector of the complex. [2Fe-2S] cluster serves as cofactor.

The catalysed reaction is a quinone + NADH + 5 H(+)(in) = a quinol + NAD(+) + 4 H(+)(out). NDH-1 shuttles electrons from NADH, via FMN and iron-sulfur (Fe-S) centers, to quinones in the respiratory chain. The immediate electron acceptor for the enzyme in this species is believed to be ubiquinone. Couples the redox reaction to proton translocation (for every two electrons transferred, four hydrogen ions are translocated across the cytoplasmic membrane), and thus conserves the redox energy in a proton gradient. The polypeptide is NADH-quinone oxidoreductase subunit E (nuoE) (Shigella flexneri).